We begin with the raw amino-acid sequence, 343 residues long: L-threonine 3-dehydrogenase (343 aa).

Cys-40 is a Zn(2+) binding site. Residues Thr-42 and His-45 each act as charge relay system in the active site. Zn(2+) contacts are provided by His-65, Glu-66, Cys-95, Cys-98, Cys-101, and Cys-109. NAD(+) contacts are provided by residues Ile-177, Asp-197, Arg-202, 264 to 266 (LGI), and 288 to 289 (IY).

Belongs to the zinc-containing alcohol dehydrogenase family. Homotetramer. It depends on Zn(2+) as a cofactor.

Its subcellular location is the cytoplasm. It carries out the reaction L-threonine + NAD(+) = (2S)-2-amino-3-oxobutanoate + NADH + H(+). It participates in amino-acid degradation; L-threonine degradation via oxydo-reductase pathway; glycine from L-threonine: step 1/2. Catalyzes the NAD(+)-dependent oxidation of L-threonine to 2-amino-3-ketobutyrate. The polypeptide is L-threonine 3-dehydrogenase (Vibrio cholerae serotype O1 (strain ATCC 39541 / Classical Ogawa 395 / O395)).